Here is a 410-residue protein sequence, read N- to C-terminus: MDGDDRRTPLLGGEGGSTRPPSLRRRDSARSLRSTFLSRLPDKVRGGGDPERPAADVDLTRAKGLSQGEKEYYEKQLATLKIFEEVEALCMPGEFESDAEVLELEDKEQKQSESAMKISNYANIILLVFKVYATIKTGSMAIAASTLDSLLDFLAGGILYFTHLTMKSVNIYKYPIGKLRVQPVGIIVFAAIMATLGFQVLIQAIEQLVENKAGEKMTPEQLIWLYSIMLSATVVKLALYIYCRSSGNSIVQAYAKDHYFDVVTNVVGLVAAVLGDKFFWWIDPVGAVLLAVYTIVNWSGTVYENAVTLVGQCAPSDMLQKLTYLAMKHDPRVRRVDTVRAYSFGALYFVEVDIELSEDMRLGEAHSIGESLQDKIEKLPEVERAFVHVDFESTHKPEHRVRSRLPSTEP.

The tract at residues 1-58 is disordered; it reads MDGDDRRTPLLGGEGGSTRPPSLRRRDSARSLRSTFLSRLPDKVRGGGDPERPAADVD. Topologically, residues 1-114 are cytoplasmic; that stretch reads MDGDDRRTPL…EDKEQKQSES (114 aa). The span at 40-58 shows a compositional bias: basic and acidic residues; the sequence is LPDKVRGGGDPERPAADVD. The helical transmembrane segment at 115-135 threads the bilayer; the sequence is AMKISNYANIILLVFKVYATI. Over 136–140 the chain is Vacuolar; sequence KTGSM. Residues 141 to 161 traverse the membrane as a helical segment; it reads AIAASTLDSLLDFLAGGILYF. The Cytoplasmic portion of the chain corresponds to 162–184; that stretch reads THLTMKSVNIYKYPIGKLRVQPV. The chain crosses the membrane as a helical span at residues 185–205; it reads GIIVFAAIMATLGFQVLIQAI. At 206–221 the chain is on the vacuolar side; that stretch reads EQLVENKAGEKMTPEQ. A helical membrane pass occupies residues 222–242; the sequence is LIWLYSIMLSATVVKLALYIY. The Cytoplasmic portion of the chain corresponds to 243–258; that stretch reads CRSSGNSIVQAYAKDH. A helical transmembrane segment spans residues 259 to 275; the sequence is YFDVVTNVVGLVAAVLG. Topologically, residues 276–284 are vacuolar; that stretch reads DKFFWWIDP. Residues 285 to 303 traverse the membrane as a helical segment; the sequence is VGAVLLAVYTIVNWSGTVY. Residues 304 to 410 lie on the Cytoplasmic side of the membrane; sequence ENAVTLVGQC…VRSRLPSTEP (107 aa).

The protein belongs to the cation diffusion facilitator (CDF) transporter (TC 2.A.4) family. SLC30A subfamily.

The protein localises to the vacuole membrane. Involved in sequestration of excess metal in the cytoplasm into vacuoles to maintain metal homeostasis. The chain is Metal tolerance protein 3 (MTP3) from Oryza sativa subsp. japonica (Rice).